The chain runs to 541 residues: Neutral amino acid transporter B(0) (541 aa).

Residue methionine 1 is modified to N-acetylmethionine. Over 1 to 51 (MVADPPRDSKGLAAAEPTANGGLALASIEDQGAAAGGYCGSRDQVRRCLRA) the chain is Cytoplasmic. A helical transmembrane segment spans residues 52 to 81 (NLLVLLTVVAVVAGVALGLGVSGAGGALAL). The Extracellular segment spans residues 82–94 (GPERLSAFVFPGE). The chain crosses the membrane as a helical span at residues 95-116 (LLLRLLRMIILPLVVCSLIGGA). At 117–130 (ASLDPGALGRLGAW) the chain is on the cytoplasmic side. The helical transmembrane segment at 131-153 (ALLFFLVTTLLASALGVGLALAL) threads the bilayer. Residues 154–224 (QPGAASAAIN…GTRVKVPVGQ (71 aa)) are Extracellular-facing. N-linked (GlcNAc...) asparagine glycans are attached at residues asparagine 163 and asparagine 212. Residues 225 to 248 (EVEGMNILGLVVFAIVFGVALRKL) traverse the membrane as a helical segment. The Cytoplasmic portion of the chain corresponds to 249–257 (GPEGELLIR). The chain crosses the membrane as a helical span at residues 258–285 (FFNSFNEATMVLVSWIMWYAPVGIMFLV). The Extracellular segment spans residues 286 to 306 (AGKIVEMEDVGLLFARLGKYI). A helical transmembrane segment spans residues 307–328 (LCCLLGHAIHGLLVLPLIYFLF). At 329–333 (TRKNP) the chain is on the cytoplasmic side. The discontinuously helical intramembrane region spans 334–364 (YRFLWGIVTPLATAFGTSSSSATLPLMMKCV). Residues 365–373 (EENNGVAKH) are Cytoplasmic-facing. The chain crosses the membrane as a helical span at residues 374-400 (ISRFILPIGATVNMDGAALFQCVAAVF). Residues glycine 382, threonine 384, and asparagine 386 each coordinate Na(+). Over 401–413 (IAQLSQQSLDFVK) the chain is Extracellular. Residues 414 to 447 (IITILVTATASSVGAAGIPAGGVLTLAIILEAVN) constitute an intramembrane region (discontinuously helical). Residues 448–460 (LPVDHISLILAVD) lie on the Extracellular side of the membrane. Residues 461–482 (WLVDRSCTVLNVEGDALGAGLL) form a helical membrane-spanning segment. Asparagine 471 and aspartate 475 together coordinate Na(+). At 483–541 (QNYVDRTESRSTEPELIQVKSELPLDPLPVPTEEGNPLLKHYRGPAGDATVASEKESVM) the chain is on the cytoplasmic side. Serine 493 is modified (phosphoserine). Threonine 494 carries the phosphothreonine modification. 3 positions are modified to phosphoserine: serine 503, serine 535, and serine 539. The segment at 511–541 (PVPTEEGNPLLKHYRGPAGDATVASEKESVM) is disordered.

This sequence belongs to the dicarboxylate/amino acid:cation symporter (DAACS) (TC 2.A.23) family. SLC1A5 subfamily. As to quaternary structure, homotrimer. Interacts with ERVH48-1/suppressyn; may negatively regulate syncytialization. Placenta, lung, skeletal muscle, kidney, pancreas, and intestine. Expressed in CD34-positive hematopoietic progenitors (at protein level).

The protein resides in the cell membrane. The protein localises to the melanosome. The enzyme catalyses L-glutamine(out) + L-serine(in) + Na(+)(out) = L-glutamine(in) + L-serine(out) + Na(+)(in). The catalysed reaction is L-glutamine(in) + L-serine(out) + Na(+)(out) = L-glutamine(out) + L-serine(in) + Na(+)(in). It catalyses the reaction L-threonine(in) + L-glutamine(out) + Na(+)(out) = L-threonine(out) + L-glutamine(in) + Na(+)(in). It carries out the reaction L-threonine(out) + L-glutamine(in) + Na(+)(out) = L-threonine(in) + L-glutamine(out) + Na(+)(in). The enzyme catalyses L-asparagine(in) + L-glutamine(out) + Na(+)(out) = L-asparagine(out) + L-glutamine(in) + Na(+)(in). The catalysed reaction is L-asparagine(out) + L-glutamine(in) + Na(+)(out) = L-asparagine(in) + L-glutamine(out) + Na(+)(in). It catalyses the reaction L-glutamine(in) + L-alanine(out) + Na(+)(out) = L-glutamine(out) + L-alanine(in) + Na(+)(in). It carries out the reaction L-valine(out) + L-glutamine(in) + Na(+)(out) = L-valine(in) + L-glutamine(out) + Na(+)(in). The enzyme catalyses L-glutamine(in) + L-methionine(out) + Na(+)(out) = L-glutamine(out) + L-methionine(in) + Na(+)(in). The catalysed reaction is L-glutamine(in) + L-glutamate(out) + Na(+)(out) + H(+)(out) = L-glutamine(out) + L-glutamate(in) + Na(+)(in) + H(+)(in). It catalyses the reaction D-serine(in) + L-glutamine(out) + Na(+)(out) = D-serine(out) + L-glutamine(in) + Na(+)(in). It carries out the reaction D-serine(in) + L-alanine(out) + Na(+)(out) = D-serine(out) + L-alanine(in) + Na(+)(in). The enzyme catalyses nitrate(in) = nitrate(out). The catalysed reaction is iodide(out) = iodide(in). It catalyses the reaction thiocyanate(in) = thiocyanate(out). With respect to regulation, regulated by L-cysteine, which can either inhibit substrate influx or trigger substrate efflux without being transported itself. Its function is as follows. Sodium-coupled antiporter of neutral amino acids. In a tri-substrate transport cycle, exchanges neutral amino acids between the extracellular and intracellular compartments, coupled to the inward cotransport of at least one sodium ion. The preferred substrate is the essential amino acid L-glutamine, a precursor for biosynthesis of proteins, nucleotides and amine sugars as well as an alternative fuel for mitochondrial oxidative phosphorylation. Exchanges L-glutamine with other neutral amino acids such as L-serine, L-threonine and L-asparagine in a bidirectional way. Provides L-glutamine to proliferating stem and activated cells driving the metabolic switch toward cell differentiation. The transport cycle is usually pH-independent, with the exception of L-glutamate. Transports extracellular L-glutamate coupled to the cotransport of one proton and one sodium ion in exchange for intracellular L-glutamine counter-ion. May provide for L-glutamate uptake in glial cells regulating glutamine/glutamate cycle in the nervous system. Can transport D-amino acids. Mediates D-serine release from the retinal glia potentially affecting NMDA receptor function in retinal neurons. Displays sodium- and amino acid-dependent but uncoupled channel-like anion conductance with a preference SCN(-) &gt;&gt; NO3(-) &gt; I(-) &gt; Cl(-). Through binding of the fusogenic protein syncytin-1/ERVW-1 may mediate trophoblasts syncytialization, the spontaneous fusion of their plasma membranes, an essential process in placental development. (Microbial infection) Acts as a cell surface receptor for Feline endogenous virus RD114. Functionally, (Microbial infection) Acts as a cell surface receptor for Baboon M7 endogenous virus. In terms of biological role, (Microbial infection) Acts as a cell surface receptor for type D simian retroviruses. In Homo sapiens (Human), this protein is Neutral amino acid transporter B(0).